A 261-amino-acid chain; its full sequence is Putative phosphite transport system permease protein HtxE (261 aa).

One can recognise an ABC transmembrane type-1 domain in the interval 47–253 (EATTETVEVL…VFVFVLDQLQ (207 aa)). 3 consecutive transmembrane segments (helical) span residues 122–142 (LIVA…GVLA), 203–220 (RNLR…GGIG), and 229–249 (MFQY…VFVL).

It belongs to the binding-protein-dependent transport system permease family.

The protein resides in the cell inner membrane. Probably forms part of a binding-protein-dependent hypophosphite transporter. The sequence is that of Putative phosphite transport system permease protein HtxE (htxE) from Stutzerimonas stutzeri (Pseudomonas stutzeri).